Reading from the N-terminus, the 538-residue chain is C-22 sterol desaturase ERG5 (538 aa).

The chain crosses the membrane as a helical span at residues 46 to 66 (LKIFATLICILLVWDQVAYQI). Glycyl lysine isopeptide (Lys-Gly) (interchain with G-Cter in ubiquitin) cross-links involve residues lysine 164 and lysine 198. Heme is bound at residue cysteine 476.

Belongs to the cytochrome P450 family. Interacts with ERG28. Heme serves as cofactor.

It is found in the endoplasmic reticulum membrane. It catalyses the reaction 5-dehydroepisterol + NADPH + O2 + H(+) = ergosta-5,7,22,24(28)-tetraen-3beta-ol + NADP(+) + 2 H2O. The protein operates within steroid metabolism; ergosterol biosynthesis; ergosterol from zymosterol: step 4/5. C-22 sterol desaturase; part of the third module of ergosterol biosynthesis pathway that includes the late steps of the pathway. ERG5 converts 5-dehydroepisterol into ergosta-5,7,22,24(28)-tetraen-3beta-ol by forming the C-22(23) double bond in the sterol side chain. The third module or late pathway involves the ergosterol synthesis itself through consecutive reactions that mainly occur in the endoplasmic reticulum (ER) membrane. Firstly, the squalene synthase ERG9 catalyzes the condensation of 2 farnesyl pyrophosphate moieties to form squalene, which is the precursor of all steroids. Squalene synthase is crucial for balancing the incorporation of farnesyl diphosphate (FPP) into sterol and nonsterol isoprene synthesis. Secondly, the squalene epoxidase ERG1 catalyzes the stereospecific oxidation of squalene to (S)-2,3-epoxysqualene, which is considered to be a rate-limiting enzyme in steroid biosynthesis. Then, the lanosterol synthase ERG7 catalyzes the cyclization of (S)-2,3 oxidosqualene to lanosterol, a reaction that forms the sterol core. In the next steps, lanosterol is transformed to zymosterol through a complex process involving various demethylation, reduction and desaturation reactions. The lanosterol 14-alpha-demethylase ERG11 (also known as CYP51) catalyzes C14-demethylation of lanosterol to produce 4,4'-dimethyl cholesta-8,14,24-triene-3-beta-ol, which is critical for ergosterol biosynthesis. The C-14 reductase ERG24 reduces the C14=C15 double bond of 4,4-dimethyl-cholesta-8,14,24-trienol to produce 4,4-dimethyl-cholesta-8,24-dienol. 4,4-dimethyl-cholesta-8,24-dienol is substrate of the C-4 demethylation complex ERG25-ERG26-ERG27 in which ERG25 catalyzes the three-step monooxygenation required for the demethylation of 4,4-dimethyl and 4alpha-methylsterols, ERG26 catalyzes the oxidative decarboxylation that results in a reduction of the 3-beta-hydroxy group at the C-3 carbon to an oxo group, and ERG27 is responsible for the reduction of the keto group on the C-3. ERG28 has a role as a scaffold to help anchor ERG25, ERG26 and ERG27 to the endoplasmic reticulum and ERG29 regulates the activity of the iron-containing C4-methylsterol oxidase ERG25. Then, the sterol 24-C-methyltransferase ERG6 catalyzes the methyl transfer from S-adenosyl-methionine to the C-24 of zymosterol to form fecosterol. The C-8 sterol isomerase ERG2 catalyzes the reaction which results in unsaturation at C-7 in the B ring of sterols and thus converts fecosterol to episterol. The sterol-C5-desaturase ERG3 then catalyzes the introduction of a C-5 double bond in the B ring to produce 5-dehydroepisterol. The C-22 sterol desaturase ERG5 further converts 5-dehydroepisterol into ergosta-5,7,22,24(28)-tetraen-3beta-ol by forming the C-22(23) double bond in the sterol side chain. Finally, ergosta-5,7,22,24(28)-tetraen-3beta-ol is substrate of the C-24(28) sterol reductase ERG4 to produce ergosterol. The chain is C-22 sterol desaturase ERG5 from Saccharomyces cerevisiae (strain ATCC 204508 / S288c) (Baker's yeast).